Reading from the N-terminus, the 383-residue chain is TOM1-like protein 2 (383 aa).

Positions 45–178 (ATLETLEEPN…GLHARGEENS (134 aa)) constitute a VHS domain. Residues 223–310 (LSIKDKKEQI…VLSSYKKPDE (88 aa)) form the GAT domain. The disordered stretch occupies residues 305–383 (YKKPDETEKK…LGLSSDEDEK (79 aa)). 2 stretches are compositionally biased toward basic and acidic residues: residues 306 to 316 (KKPDETEKKAS) and 339 to 354 (EPVK…KHSE). Residues serine 377 and serine 378 each carry the phosphoserine modification.

The protein belongs to the TOM1 family. In terms of tissue distribution, ubiquitously expressed.

The protein resides in the cytoplasm. Its subcellular location is the membrane. Its function is as follows. Binds ubiquitin in vitro. Might contribute to the loading of the ESCRT machinery. The sequence is that of TOM1-like protein 2 from Arabidopsis thaliana (Mouse-ear cress).